The chain runs to 349 residues: Cobalt-precorrin-5B C(1)-methyltransferase (349 aa).

The protein belongs to the CbiD family.

The enzyme catalyses Co-precorrin-5B + S-adenosyl-L-methionine = Co-precorrin-6A + S-adenosyl-L-homocysteine. It participates in cofactor biosynthesis; adenosylcobalamin biosynthesis; cob(II)yrinate a,c-diamide from sirohydrochlorin (anaerobic route): step 6/10. Catalyzes the methylation of C-1 in cobalt-precorrin-5B to form cobalt-precorrin-6A. In Saccharolobus islandicus (strain L.S.2.15 / Lassen #1) (Sulfolobus islandicus), this protein is Cobalt-precorrin-5B C(1)-methyltransferase.